Here is a 128-residue protein sequence, read N- to C-terminus: Nascent polypeptide-associated complex protein (128 aa).

The NAC-A/B domain maps to 8–75 (PRMLKKMQKM…PKKIKKEKVE (68 aa)).

The protein belongs to the NAC-alpha family. Homodimer. Interacts with the ribosome. Binds ribosomal RNA.

Functionally, contacts the emerging nascent chain on the ribosome. This Methanocaldococcus jannaschii (strain ATCC 43067 / DSM 2661 / JAL-1 / JCM 10045 / NBRC 100440) (Methanococcus jannaschii) protein is Nascent polypeptide-associated complex protein.